The chain runs to 154 residues: Prefoldin subunit alpha (154 aa).

Residues 123–154 (EAEQLEQQAQQAQQQMMQQQMQAQQQPQDGEQ) are disordered. The span at 127 to 154 (LEQQAQQAQQQMMQQQMQAQQQPQDGEQ) shows a compositional bias: low complexity.

It belongs to the prefoldin alpha subunit family. As to quaternary structure, heterohexamer of two alpha and four beta subunits.

It localises to the cytoplasm. Its function is as follows. Molecular chaperone capable of stabilizing a range of proteins. Seems to fulfill an ATP-independent, HSP70-like function in archaeal de novo protein folding. The chain is Prefoldin subunit alpha from Halobacterium salinarum (strain ATCC 29341 / DSM 671 / R1).